A 780-amino-acid polypeptide reads, in one-letter code: Zinc finger and SCAN domain-containing protein 10 (780 aa).

Positions 1–38 (MLGESVPAAVEQEQLGEVKLEEEEAVSPEDPRRPESRL) are disordered. Basic and acidic residues predominate over residues 29-38 (EDPRRPESRL). Positions 56-126 (MGPRASLSRL…LLLEGIHREP (71 aa)) constitute an SCAN box domain. Disordered regions lie at residues 153–237 (GCAS…SRDQ) and 255–324 (KAWP…GSLL). Phosphoserine occurs at positions 162 and 208. Over residues 202–224 (SSKQPLSPGPQKTFQALQESSPQ) the composition is skewed to polar residues. T268 is modified (phosphothreonine). A compositionally biased stretch (basic and acidic residues) spans 268–280 (TPDKEEFKQEEPK). 14 consecutive C2H2-type zinc fingers follow at residues 347–370 (FICADCGVSFPQLSRLKAHQLRSH), 376–398 (FLCLCCGKSFGRSSILKLHMRTH), 404–426 (HACHLCGHRFRQSSHLSKHLLTH), 432–454 (FLCAECGRGFQRRASLVQHLLAH), 476–498 (VLCSHCGQSFQRRSSLKRHLRIH), 522–544 (FVCSDCGKAFRRSEHLVAHRRVH), 550–572 (FSCQACGRSFTQSSQLVSHQRVH), 578–600 (YACPQCGKRFVRRASLARHLLTH), 606–628 (HHCTQCGKSFGQTQDLARHQRSH), 634–656 (CRCSECGEGFSQSAHLARHQRIH), 662–684 (HACDTCGHRFRNSSNLARHRRSH), 690–712 (YSCQTCGRSFRRNAHLRRHLATH), 724–746 (QECVECGKSFSRSCNLLRHLLVH), and 752–774 (YSCTQCGRSFSRNSHLLRHLRTH). The residue at position 483 (Q483) is an N5-methylglutamine. The segment at 492–520 (KRHLRIHARDKDRRSSEGSGSRRRDSDRR) is disordered. Over residues 498–520 (HARDKDRRSSEGSGSRRRDSDRR) the composition is skewed to basic and acidic residues.

In terms of assembly, interacts with POU5F1/OCT4 and SOX2. Post-translationally, methylated at Gln-483 by N6AMT1.

Its subcellular location is the nucleus. Functionally, embryonic stem (ES) cell-specific transcription factor required to maintain ES cell pluripotency. Can both activate and /or repress expression of target genes, depending on the context. Specifically binds the 5'-[GA]CGCNNGCG[CT]-3' DNA consensus sequence. Regulates expression of POU5F1/OCT4, ZSCAN4 and ALYREF/THOC4. This Homo sapiens (Human) protein is Zinc finger and SCAN domain-containing protein 10 (ZSCAN10).